The following is a 405-amino-acid chain: MDHLPMPKFGPLAGLRVVFSGIEIAGPFAGQMFAEWGAEVIWIENVAWADTIRVQPNYPQLSRRNLHALSLNIFKDEGREAFLKLMETTDIFIEASKGPAFARRGITDEVLWQHNPKLVIAHLSGFGQYGTEEYTNLPAYNTIAQAFSGYLIQNGDVDQPMPAFPYTADYFSGLTATTAALAALHKARETGKGESIDIAMYEVMLRMGQYFMMDYFNGGEMCPRMTKGKDPYYAGCGLYKCADGYIVMELVGITQIEECFKDIGLAHLLGTPEIPEGTQLIHRIECPYGPLVEEKLDAWLAAHTIAEVKERFAELNIACAKVLTVPELESNPQYVARESITQWQTMDGRTCKGPNVMPKFKNNPGQIWRGMPSHGMDTAAILKNIGYSENDIQELVSKGLAKVED.

CoA-binding residues include Lys-97 and Arg-104. Catalysis depends on Asp-169, which acts as the Nucleophile.

Belongs to the CoA-transferase III family. CaiB subfamily. As to quaternary structure, homodimer.

The protein resides in the cytoplasm. It catalyses the reaction crotonobetainyl-CoA + (R)-carnitine = crotonobetaine + (R)-carnitinyl-CoA. The catalysed reaction is 4-(trimethylamino)butanoyl-CoA + (R)-carnitine = (R)-carnitinyl-CoA + 4-(trimethylamino)butanoate. It functions in the pathway amine and polyamine metabolism; carnitine metabolism. Catalyzes the reversible transfer of the CoA moiety from gamma-butyrobetainyl-CoA to L-carnitine to generate L-carnitinyl-CoA and gamma-butyrobetaine. Is also able to catalyze the reversible transfer of the CoA moiety from gamma-butyrobetainyl-CoA or L-carnitinyl-CoA to crotonobetaine to generate crotonobetainyl-CoA. The protein is L-carnitine CoA-transferase of Escherichia coli O17:K52:H18 (strain UMN026 / ExPEC).